We begin with the raw amino-acid sequence, 103 residues long: Small ribosomal subunit protein uS10 (103 aa).

This sequence belongs to the universal ribosomal protein uS10 family. Part of the 30S ribosomal subunit.

Its function is as follows. Involved in the binding of tRNA to the ribosomes. This chain is Small ribosomal subunit protein uS10, found in Xylella fastidiosa (strain M12).